The sequence spans 872 residues: Alanine--tRNA ligase (872 aa).

Zn(2+) is bound by residues His567, His571, Cys669, and His673.

Belongs to the class-II aminoacyl-tRNA synthetase family. It depends on Zn(2+) as a cofactor.

Its subcellular location is the cytoplasm. It catalyses the reaction tRNA(Ala) + L-alanine + ATP = L-alanyl-tRNA(Ala) + AMP + diphosphate. Functionally, catalyzes the attachment of alanine to tRNA(Ala) in a two-step reaction: alanine is first activated by ATP to form Ala-AMP and then transferred to the acceptor end of tRNA(Ala). Also edits incorrectly charged Ser-tRNA(Ala) and Gly-tRNA(Ala) via its editing domain. This is Alanine--tRNA ligase from Streptococcus pneumoniae (strain CGSP14).